The following is a 349-amino-acid chain: N-acetyltaurine hydrolase (349 aa).

A divalent metal cation-binding residues include histidine 26, histidine 28, glutamate 169, histidine 201, histidine 230, and aspartate 298.

It belongs to the metallo-dependent hydrolases superfamily. Phosphotriesterase family. Requires a divalent metal cation as cofactor.

The protein resides in the cytoplasm. The protein localises to the cytosol. The enzyme catalyses N-acetyltaurine + H2O = taurine + acetate. It catalyses the reaction N-propanoyltaurine + H2O = propanoate + taurine. The catalysed reaction is N-acetyl-L-methionine + H2O = L-methionine + acetate. It carries out the reaction N-acetyl-L-isoleucine + H2O = L-isoleucine + acetate. The enzyme catalyses N-acetyl-L-leucine + H2O = L-leucine + acetate. It catalyses the reaction N-acetyl-L-valine + H2O = L-valine + acetate. In terms of biological role, N-acetyltaurine hydrolase that regulates feeding by catalyzing the hydrolysis of N-acetyltaurine into taurine and acetate. N-acetyltaurine has anorexigenic and anti-obesity effects that are dependent on GFRAL receptor and GDF15. PTER also acts on other N-acetyl amino acids (Met, Ile, Leu, Val) and N-propionyltaurine, but at lower rates. The polypeptide is N-acetyltaurine hydrolase (Homo sapiens (Human)).